The following is a 200-amino-acid chain: ATP synthase subunit b 2 (200 aa).

A compositionally biased stretch (polar residues) spans 1-16 (MAEQNILTTPSPNADT). Residues 1 to 38 (MAEQNILTTPSPNADTTIVPPGSPHTHTEQPSGGHGGA) are disordered. The helical transmembrane segment at 46–66 (TFLAQLIWLALAFGLLYYLMS) threads the bilayer.

This sequence belongs to the ATPase B chain family. As to quaternary structure, F-type ATPases have 2 components, F(1) - the catalytic core - and F(0) - the membrane proton channel. F(1) has five subunits: alpha(3), beta(3), gamma(1), delta(1), epsilon(1). F(0) has three main subunits: a(1), b(2) and c(10-14). The alpha and beta chains form an alternating ring which encloses part of the gamma chain. F(1) is attached to F(0) by a central stalk formed by the gamma and epsilon chains, while a peripheral stalk is formed by the delta and b chains.

It localises to the cell inner membrane. F(1)F(0) ATP synthase produces ATP from ADP in the presence of a proton or sodium gradient. F-type ATPases consist of two structural domains, F(1) containing the extramembraneous catalytic core and F(0) containing the membrane proton channel, linked together by a central stalk and a peripheral stalk. During catalysis, ATP synthesis in the catalytic domain of F(1) is coupled via a rotary mechanism of the central stalk subunits to proton translocation. Its function is as follows. Component of the F(0) channel, it forms part of the peripheral stalk, linking F(1) to F(0). The b'-subunit is a diverged and duplicated form of b found in plants and photosynthetic bacteria. In Methylorubrum populi (strain ATCC BAA-705 / NCIMB 13946 / BJ001) (Methylobacterium populi), this protein is ATP synthase subunit b 2 (atpF2).